The primary structure comprises 397 residues: 1-deoxy-D-xylulose 5-phosphate reductoisomerase (397 aa).

NADPH contacts are provided by S10, G11, S12, I13, A36, R37, and N124. Residue K125 coordinates 1-deoxy-D-xylulose 5-phosphate. Residue E126 coordinates NADPH. D150 contributes to the Mn(2+) binding site. 1-deoxy-D-xylulose 5-phosphate contacts are provided by S151, E152, S186, and H209. Position 152 (E152) interacts with Mn(2+). G215 contributes to the NADPH binding site. Residues S222, N227, K228, and E231 each contribute to the 1-deoxy-D-xylulose 5-phosphate site. Position 231 (E231) interacts with Mn(2+).

The protein belongs to the DXR family. Requires Mg(2+) as cofactor. Mn(2+) serves as cofactor.

The enzyme catalyses 2-C-methyl-D-erythritol 4-phosphate + NADP(+) = 1-deoxy-D-xylulose 5-phosphate + NADPH + H(+). It participates in isoprenoid biosynthesis; isopentenyl diphosphate biosynthesis via DXP pathway; isopentenyl diphosphate from 1-deoxy-D-xylulose 5-phosphate: step 1/6. Functionally, catalyzes the NADPH-dependent rearrangement and reduction of 1-deoxy-D-xylulose-5-phosphate (DXP) to 2-C-methyl-D-erythritol 4-phosphate (MEP). In Aeromonas hydrophila subsp. hydrophila (strain ATCC 7966 / DSM 30187 / BCRC 13018 / CCUG 14551 / JCM 1027 / KCTC 2358 / NCIMB 9240 / NCTC 8049), this protein is 1-deoxy-D-xylulose 5-phosphate reductoisomerase.